A 135-amino-acid polypeptide reads, in one-letter code: ATP synthase epsilon chain (135 aa).

The protein belongs to the ATPase epsilon chain family. In terms of assembly, F-type ATPases have 2 components, CF(1) - the catalytic core - and CF(0) - the membrane proton channel. CF(1) has five subunits: alpha(3), beta(3), gamma(1), delta(1), epsilon(1). CF(0) has three main subunits: a, b and c.

The protein localises to the cellular thylakoid membrane. Produces ATP from ADP in the presence of a proton gradient across the membrane. In Prochlorococcus marinus (strain MIT 9211), this protein is ATP synthase epsilon chain.